Here is a 283-residue protein sequence, read N- to C-terminus: Probable protein phosphatase 2C 58 (283 aa).

A PPM-type phosphatase domain is found at 35–282 (THGFHCVKGK…DDISCIVVKF (248 aa)). The Mn(2+) site is built by aspartate 72, glycine 73, aspartate 234, and aspartate 273.

The protein belongs to the PP2C family. Mg(2+) serves as cofactor. It depends on Mn(2+) as a cofactor.

It catalyses the reaction O-phospho-L-seryl-[protein] + H2O = L-seryl-[protein] + phosphate. The catalysed reaction is O-phospho-L-threonyl-[protein] + H2O = L-threonyl-[protein] + phosphate. The chain is Probable protein phosphatase 2C 58 from Arabidopsis thaliana (Mouse-ear cress).